We begin with the raw amino-acid sequence, 98 residues long: Large ribosomal subunit protein uL23 (98 aa).

This sequence belongs to the universal ribosomal protein uL23 family. In terms of assembly, part of the 50S ribosomal subunit. Contacts protein L29, and trigger factor when it is bound to the ribosome.

Its function is as follows. One of the early assembly proteins it binds 23S rRNA. One of the proteins that surrounds the polypeptide exit tunnel on the outside of the ribosome. Forms the main docking site for trigger factor binding to the ribosome. The chain is Large ribosomal subunit protein uL23 from Streptococcus equi subsp. equi (strain 4047).